We begin with the raw amino-acid sequence, 204 residues long: UPF0637 protein SA0957 (204 aa).

Belongs to the UPF0637 family.

The chain is UPF0637 protein SA0957 from Staphylococcus aureus (strain N315).